Here is a 110-residue protein sequence, read N- to C-terminus: UPF0060 membrane protein PFL_4337 (110 aa).

4 helical membrane-spanning segments follow: residues 5-25, 31-51, 59-79, and 84-104; these read LWFF…WMWL, ALWV…LTKV, AYAA…AVVE, and LGSD…ILFG.

The protein belongs to the UPF0060 family.

The protein localises to the cell inner membrane. This Pseudomonas fluorescens (strain ATCC BAA-477 / NRRL B-23932 / Pf-5) protein is UPF0060 membrane protein PFL_4337.